Here is a 288-residue protein sequence, read N- to C-terminus: ATP synthase gamma chain (288 aa).

The protein belongs to the ATPase gamma chain family. As to quaternary structure, F-type ATPases have 2 components, CF(1) - the catalytic core - and CF(0) - the membrane proton channel. CF(1) has five subunits: alpha(3), beta(3), gamma(1), delta(1), epsilon(1). CF(0) has three main subunits: a, b and c.

Its subcellular location is the cell inner membrane. Produces ATP from ADP in the presence of a proton gradient across the membrane. The gamma chain is believed to be important in regulating ATPase activity and the flow of protons through the CF(0) complex. The polypeptide is ATP synthase gamma chain (Legionella pneumophila (strain Corby)).